The chain runs to 422 residues: NADH-quinone oxidoreductase subunit D 1 (422 aa).

This sequence belongs to the complex I 49 kDa subunit family. As to quaternary structure, NDH-1 is composed of 14 different subunits. Subunits NuoB, C, D, E, F, and G constitute the peripheral sector of the complex.

It localises to the cell membrane. It carries out the reaction a quinone + NADH + 5 H(+)(in) = a quinol + NAD(+) + 4 H(+)(out). Its function is as follows. NDH-1 shuttles electrons from NADH, via FMN and iron-sulfur (Fe-S) centers, to quinones in the respiratory chain. The immediate electron acceptor for the enzyme in this species is believed to be ubiquinone. Couples the redox reaction to proton translocation (for every two electrons transferred, four hydrogen ions are translocated across the cytoplasmic membrane), and thus conserves the redox energy in a proton gradient. This chain is NADH-quinone oxidoreductase subunit D 1, found in Herpetosiphon aurantiacus (strain ATCC 23779 / DSM 785 / 114-95).